The following is a 374-amino-acid chain: Organelle RRM domain-containing protein 1, chloroplastic (374 aa).

The transit peptide at 1–54 (MEALIASTSFFVPISNSSSSHIINNRFFPSFYSPNLNFGTFRKTSLSSSHLVFS) directs the protein to the chloroplast. Over residues 258 to 271 (KDYEGDSTQDSRDQ) the composition is skewed to basic and acidic residues. Positions 258–279 (KDYEGDSTQDSRDQDDSESPPV) are disordered. The RRM domain maps to 282 to 360 (KKLFITGLSF…WMIVVDVAKT (79 aa)).

Interacts with PCMP-H51/CRR28 and PCMP-H12/OTP82. Interacts with MORF8/RIP1, MORF2/RIP2 and VAR3/OZ1.

The protein resides in the plastid. Its subcellular location is the chloroplast. Involved in C-to-U editing of chloroplastic RNA. Functions as major chloroplastic editing factor. Controls 62 percent of the chloroplastic editing sites. Binds RNA close to ORRM1-dependent editing sites in vitro. Binds the editing recognition trans-factors PCMP-H51/CRR28 and PCMP-H12/OTP82. This chain is Organelle RRM domain-containing protein 1, chloroplastic, found in Arabidopsis thaliana (Mouse-ear cress).